Here is a 132-residue protein sequence, read N- to C-terminus: Holo-[acyl-carrier-protein] synthase (132 aa).

The Mg(2+) site is built by Asp8 and Glu64.

The protein belongs to the P-Pant transferase superfamily. AcpS family. Mg(2+) serves as cofactor.

It is found in the cytoplasm. It carries out the reaction apo-[ACP] + CoA = holo-[ACP] + adenosine 3',5'-bisphosphate + H(+). Functionally, transfers the 4'-phosphopantetheine moiety from coenzyme A to a Ser of acyl-carrier-protein. In Shewanella woodyi (strain ATCC 51908 / MS32), this protein is Holo-[acyl-carrier-protein] synthase.